Here is a 118-residue protein sequence, read N- to C-terminus: Deoxynogalonate monooxygenase (118 aa).

Positions 14–100 (VTFVNRFTVH…ALSTSEHGLF (87 aa)) constitute an ABM domain.

Homodimer.

The enzyme catalyses deoxynogalonate + O2 = nogalonate + H2O + H(+). It participates in antibiotic biosynthesis. Functionally, involved in the biosynthesis of the anthracycline (aromatic polyketide) antibiotic nogalamycin. Catalyzes the oxygenation of 12-deoxy-nogalonic acid at position 12 to yield nogalonic acid. This chain is Deoxynogalonate monooxygenase, found in Streptomyces nogalater.